Reading from the N-terminus, the 84-residue chain is Small, acid-soluble spore protein gamma-type (84 aa).

2 stretches are compositionally biased toward polar residues: residues 1–25 (MANS…SAAG) and 34–44 (ASETNAQQVRK). The interval 1 to 84 (MANSNNFSKT…SAEQNKQQNS (84 aa)) is disordered. 2 repeats span residues 21 to 47 (QSAA…KQNQ) and 48 to 74 (QSAG…QQNQ). Low complexity-rich tracts occupy residues 45-57 (QNQQ…GQFG) and 71-84 (QQNQ…QQNS).

This sequence belongs to the gamma-type SASP family.

In terms of biological role, SASP are proteins degraded in the first minutes of spore germination and provide amino acids for both new protein synthesis and metabolism. These proteins may be involved in dormant spore's high resistance to UV light. In Bacillus subtilis (strain 168), this protein is Small, acid-soluble spore protein gamma-type (sspE).